The sequence spans 773 residues: C-Maf-inducing protein (773 aa).

A disordered region spans residues 1-30 (MDVTSSSGGGGDPRQIEETKPLLGGDVSAP). In terms of domain architecture, PH spans 54 to 163 (LLQEGDIQVC…HSLQWKKKIY (110 aa)). A phosphoserine mark is found at Ser-349, Ser-377, Ser-382, and Ser-660. 4 LRR repeats span residues 663–686 (NLEN…IKLP), 687–707 (SLKQ…RLLS), 712–732 (MLQV…LALS), and 736–756 (SLCS…EDLK).

As to quaternary structure, interacts with FLNA. Isoform 1 is expressed in peripheral blood mononuclear cells and kidney. Lower expression in brain and liver. Expression is down-regulated in activated cells. Isoform 2 is expressed in lymphocyte precursors, however, expression shuts down during maturation and differentiation in thymus and fetal liver.

It localises to the nucleus. It is found in the cytoplasm. Its function is as follows. Plays a role in T-cell signaling pathway. Isoform 2 may play a role in T-helper 2 (Th2) signaling pathway and seems to represent the first proximal signaling protein that links T-cell receptor-mediated signal to the activation of c-Maf Th2 specific factor. The chain is C-Maf-inducing protein (CMIP) from Homo sapiens (Human).